The primary structure comprises 342 residues: L-lysine 2,3-aminomutase (342 aa).

Positions 106–329 constitute a Radical SAM core domain; sequence HKYHNRALLL…PKLAREIGGE (224 aa). The [4Fe-4S] cluster site is built by C120, C124, and C127. An N6-(pyridoxal phosphate)lysine modification is found at K332.

It belongs to the radical SAM superfamily. KamA family. [4Fe-4S] cluster serves as cofactor. Requires pyridoxal 5'-phosphate as cofactor.

The enzyme catalyses L-lysine = D-beta-lysine. In terms of biological role, with EpmA is involved in the beta-lysylation step of the post-translational modification of translation elongation factor P (EF-P) on 'Lys-34'. EpmB appears to act before EpmA. Displays lysine 2,3-aminomutase activity, producing (R)-beta-lysine from (S)-alpha-lysine (L-lysine). Cannot use (S)-ornithine or (R)-alpha-lysine as a substrate. The chain is L-lysine 2,3-aminomutase (epmB) from Escherichia coli (strain K12).